Here is a 472-residue protein sequence, read N- to C-terminus: Squamosa promoter-binding-like protein 18 (472 aa).

Residues 89–110 (AKVPPSTSTLKRPRGGGGGGGG) form a disordered region. An SBP-type zinc finger spans residues 112-189 (CPSCAVDGCK…DGHNRRRRKP (78 aa)). Zn(2+)-binding residues include Cys-115, Cys-120, Cys-137, His-140, Cys-156, Cys-159, His-163, and Cys-175. The Bipartite nuclear localization signal motif lies at 172 to 188 (KRSCRKRLDGHNRRRRK). Disordered regions lie at residues 179–218 (LDGH…RPEP), 233–261 (SHHH…TAAF), and 358–381 (SVDV…HHHH). A compositionally biased stretch (polar residues) spans 192–209 (DSMSSGSFMTSQQGTRFA). Low complexity predominate over residues 252–261 (SPSSATTAAF).

In terms of tissue distribution, expressed in young panicles.

It is found in the nucleus. In terms of biological role, trans-acting factor that binds specifically to the consensus nucleotide sequence 5'-TNCGTACAA-3'. May be involved in panicle development. This is Squamosa promoter-binding-like protein 18 (SPL18) from Oryza sativa subsp. japonica (Rice).